Reading from the N-terminus, the 209-residue chain is Max dimerization protein 4 (209 aa).

The tract at residues Leu-6 to Ala-23 is interaction with SIN3A and SIN3B. The bHLH domain occupies Asn-53–Leu-105. The disordered stretch occupies residues Arg-140–Ser-209. Over residues Asp-153–Gly-163 the composition is skewed to acidic residues. Basic residues predominate over residues His-199 to Ser-209.

As to quaternary structure, efficient DNA binding requires dimerization with another bHLH protein. Binds DNA as a heterodimer with MAX. Interacts with SIN3A AND SIN3B. Interacts with RNF17.

The protein resides in the nucleus. In terms of biological role, transcriptional repressor. Binds with MAX to form a sequence-specific DNA-binding protein complex which recognizes the core sequence 5'-CAC[GA]TG-3'. Antagonizes MYC transcriptional activity by competing for MAX and suppresses MYC dependent cell transformation. This Homo sapiens (Human) protein is Max dimerization protein 4 (MXD4).